Consider the following 95-residue polypeptide: Aspartyl/glutamyl-tRNA(Asn/Gln) amidotransferase subunit C (95 aa).

This sequence belongs to the GatC family. In terms of assembly, heterotrimer of A, B and C subunits.

The catalysed reaction is L-glutamyl-tRNA(Gln) + L-glutamine + ATP + H2O = L-glutaminyl-tRNA(Gln) + L-glutamate + ADP + phosphate + H(+). The enzyme catalyses L-aspartyl-tRNA(Asn) + L-glutamine + ATP + H2O = L-asparaginyl-tRNA(Asn) + L-glutamate + ADP + phosphate + 2 H(+). Functionally, allows the formation of correctly charged Asn-tRNA(Asn) or Gln-tRNA(Gln) through the transamidation of misacylated Asp-tRNA(Asn) or Glu-tRNA(Gln) in organisms which lack either or both of asparaginyl-tRNA or glutaminyl-tRNA synthetases. The reaction takes place in the presence of glutamine and ATP through an activated phospho-Asp-tRNA(Asn) or phospho-Glu-tRNA(Gln). The chain is Aspartyl/glutamyl-tRNA(Asn/Gln) amidotransferase subunit C from Rhizobium johnstonii (strain DSM 114642 / LMG 32736 / 3841) (Rhizobium leguminosarum bv. viciae).